The chain runs to 505 residues: Dolichyl pyrophosphate Glc1Man9GlcNAc2 alpha-1,3-glucosyltransferase (505 aa).

Residues 1–3 are Lumenal-facing; it reads MAE. A helical membrane pass occupies residues 4 to 24; sequence IYPSLVQCAIVATAFKVLLFP. The Cytoplasmic segment spans residues 25-101; the sequence is AYKSTDFEVH…DSWQTVYFQR (77 aa). A helical transmembrane segment spans residues 102–122; it reads WTVIVTELVLLYALQMFVDST. Topologically, residues 123-128 are lumenal; the sequence is PGVSKR. Residues 129 to 149 form a helical membrane-spanning segment; the sequence is AAHAAAVSILLSPGLLIIDHI. At 150 to 152 the chain is on the cytoplasmic side; the sequence is HFQ. The chain crosses the membrane as a helical span at residues 153-169; it reads YNGVMYGILIASLVLAK. Over 170–173 the chain is Lumenal; it reads KKSS. Residues 174 to 194 traverse the membrane as a helical segment; that stretch reads LLASGLVFAALLCMKHIYLYL. The Cytoplasmic segment spans residues 195–224; it reads APAYFVYLLRVYCLPPKLSPRSIFRIQFFN. The helical transmembrane segment at 225–245 threads the bilayer; the sequence is CVKLGGGIAAIFAAAFGPFAL. Residues 246–319 lie on the Lumenal side of the membrane; it reads KNQIPQIFSR…TSFAVLPDIT (74 aa). Residues 320-340 form a helical membrane-spanning segment; the sequence is PRMCFVLTLLFQAIPLIKLFM. Residues 341 to 359 are Cytoplasmic-facing; sequence RPTWEGFIGGVTLCGYASF. A helical transmembrane segment spans residues 360–380; sequence LFGWHVHEKAILLVIIPFSLI. Over 381-386 the chain is Lumenal; the sequence is ALKDRR. Residues 387–407 traverse the membrane as a helical segment; the sequence is YLGAFRPLAVAGHVSLFPLIF. The Cytoplasmic portion of the chain corresponds to 408 to 409; the sequence is TP. A helical transmembrane segment spans residues 410-430; sequence AEFPIKTVYTIFWLVLFLMAF. Residues 431-450 are Lumenal-facing; that stretch reads DRLAPAPTRQRLFLFDRFST. The helical transmembrane segment at 451 to 471 threads the bilayer; sequence AYITVSIPLIFYCSLMHGIIF. Residues 472–480 are Cytoplasmic-facing; that stretch reads GKSYEFLPL. A helical transmembrane segment spans residues 481–501; that stretch reads MFTSSYSAIGVVGSWLGFMVV. At 502–505 the chain is on the lumenal side; it reads YFTE.

It belongs to the ALG6/ALG8 glucosyltransferase family.

The protein localises to the endoplasmic reticulum membrane. The catalysed reaction is an alpha-D-Glc-(1-&gt;3)-alpha-D-Man-(1-&gt;2)-alpha-D-Man-(1-&gt;2)-alpha-D-Man-(1-&gt;3)-[alpha-D-Man-(1-&gt;2)-alpha-D-Man-(1-&gt;3)-[alpha-D-Man-(1-&gt;2)-alpha-D-Man-(1-&gt;6)]-alpha-D-Man-(1-&gt;6)]-beta-D-Man-(1-&gt;4)-beta-D-GlcNAc-(1-&gt;4)-alpha-D-GlcNAc-diphospho-di-trans,poly-cis-dolichol + a di-trans,poly-cis-dolichyl beta-D-glucosyl phosphate = an alpha-D-Glc-(1-&gt;3)-alpha-D-Glc-(1-&gt;3)-alpha-D-Man-(1-&gt;2)-alpha-D-Man-(1-&gt;2)-alpha-D-Man-(1-&gt;3)-[alpha-D-Man-(1-&gt;2)-alpha-D-Man-(1-&gt;3)-[alpha-D-Man-(1-&gt;2)-alpha-D-Man-(1-&gt;6)]-alpha-D-Man-(1-&gt;6)]-beta-D-Man-(1-&gt;4)-beta-D-GlcNAc-(1-&gt;4)-alpha-D-GlcNAc-diphospho-di-trans,poly-cis-dolichol + a di-trans,poly-cis-dolichyl phosphate + H(+). It functions in the pathway protein modification; protein glycosylation. Its function is as follows. Dolichyl pyrophosphate Glc1Man9GlcNAc2 alpha-1,3-glucosyltransferase that operates in the biosynthetic pathway of dolichol-linked oligosaccharides, the glycan precursors employed in protein asparagine (N)-glycosylation. The assembly of dolichol-linked oligosaccharides begins on the cytosolic side of the endoplasmic reticulum membrane and finishes in its lumen. The sequential addition of sugars to dolichol pyrophosphate produces dolichol-linked oligosaccharides containing fourteen sugars, including two GlcNAcs, nine mannoses and three glucoses. Once assembled, the oligosaccharide is transferred from the lipid to nascent proteins by oligosaccharyltransferases. In the lumen of the endoplasmic reticulum, adds the second glucose residue from dolichyl phosphate glucose (Dol-P-Glc) onto the lipid-linked oligosaccharide intermediate Glc(1)Man(9)GlcNAc(2)-PP-Dol to produce Glc(2)Man(9)GlcNAc(2)-PP-Dol. The protein is Dolichyl pyrophosphate Glc1Man9GlcNAc2 alpha-1,3-glucosyltransferase (alg-8) of Neurospora crassa (strain ATCC 24698 / 74-OR23-1A / CBS 708.71 / DSM 1257 / FGSC 987).